A 353-amino-acid chain; its full sequence is UDP-xylose transporter 2 (353 aa).

The next 10 helical transmembrane spans lie at 7–27 (FQLG…SIVI), 31–51 (ALIS…HLLV), 75–95 (VLGF…SLGF), 100–120 (FYQM…TIFF), 132–152 (LVIL…LNML), 154–174 (SVLS…TNTI), 194–214 (AITL…QNVF), 224–244 (FFIV…FLVI), 250–270 (VTYQ…GYLL), and 280–300 (ILGI…CTLE). The segment at 308–353 (TSTQLPQMDENEKDPLVSAENGSGLISDNGVQKQDPVWNSNKDFQA) is disordered. A compositionally biased stretch (polar residues) spans 327–353 (ENGSGLISDNGVQKQDPVWNSNKDFQA). Ser334 is modified (phosphoserine).

Belongs to the TPT transporter family. TPT (TC 2.A.7.9) subfamily. As to expression, ubiquitous.

It localises to the golgi apparatus membrane. In terms of biological role, nucleotide-sugar transporter that transports UDP-xylose and UMP in a strict counter-exchange mode. The sequence is that of UDP-xylose transporter 2 from Arabidopsis thaliana (Mouse-ear cress).